Consider the following 676-residue polypeptide: Probable metal-nicotianamine transporter YSL6 (676 aa).

13 consecutive transmembrane segments (helical) span residues I38 to H58, L62 to V82, C110 to M130, G154 to V174, I276 to V296, V321 to A341, F392 to F412, P413 to C433, I452 to A472, V510 to F530, L561 to L581, F604 to W624, and V639 to I659.

This sequence belongs to the YSL (TC 2.A.67.2) family.

It localises to the membrane. In terms of biological role, may be involved in the transport of nicotianamine-chelated metals. The sequence is that of Probable metal-nicotianamine transporter YSL6 (YSL6) from Arabidopsis thaliana (Mouse-ear cress).